The sequence spans 76 residues: Sec-independent protein translocase protein TatA (76 aa).

A helical transmembrane segment spans residues 1 to 21; that stretch reads MGGLSIWHWLIVLLIVALVFG. Positions 40-76 are disordered; the sequence is KDGMKEGETPADAQQLPRSGAVDVNAKETTRSDSNKA. Residues 64–76 show a composition bias toward basic and acidic residues; the sequence is NAKETTRSDSNKA.

This sequence belongs to the TatA/E family. As to quaternary structure, the Tat system comprises two distinct complexes: a TatABC complex, containing multiple copies of TatA, TatB and TatC subunits, and a separate TatA complex, containing only TatA subunits. Substrates initially bind to the TatABC complex, which probably triggers association of the separate TatA complex to form the active translocon.

The protein resides in the cell inner membrane. Part of the twin-arginine translocation (Tat) system that transports large folded proteins containing a characteristic twin-arginine motif in their signal peptide across membranes. TatA could form the protein-conducting channel of the Tat system. This chain is Sec-independent protein translocase protein TatA, found in Burkholderia cenocepacia (strain HI2424).